A 137-amino-acid polypeptide reads, in one-letter code: Holo-[acyl-carrier-protein] synthase (137 aa).

Mg(2+) is bound by residues D8 and E58.

This sequence belongs to the P-Pant transferase superfamily. AcpS family. Mg(2+) serves as cofactor.

It localises to the cytoplasm. It carries out the reaction apo-[ACP] + CoA = holo-[ACP] + adenosine 3',5'-bisphosphate + H(+). Its function is as follows. Transfers the 4'-phosphopantetheine moiety from coenzyme A to a Ser of acyl-carrier-protein. The chain is Holo-[acyl-carrier-protein] synthase from Lactobacillus delbrueckii subsp. bulgaricus (strain ATCC BAA-365 / Lb-18).